Reading from the N-terminus, the 294-residue chain is GTPase Era (294 aa).

Residues 2 to 171 (NSGVVTIIGR…LSLLIELLPE (170 aa)) form the Era-type G domain. The interval 10 to 17 (GRPSAGKS) is G1. Residue 10-17 (GRPSAGKS) coordinates GTP. The segment at 36–40 (QTTRN) is G2. Residues 57–60 (DTPG) are G3. Residues 57-61 (DTPGY) and 119-122 (NKAD) contribute to the GTP site. Positions 119–122 (NKAD) are G4. The segment at 150 to 152 (ISA) is G5. Residues 202 to 280 (TREEIPHALY…QLDLQVRVNK (79 aa)) form the KH type-2 domain.

It belongs to the TRAFAC class TrmE-Era-EngA-EngB-Septin-like GTPase superfamily. Era GTPase family. As to quaternary structure, monomer.

Its subcellular location is the cytoplasm. The protein resides in the cell inner membrane. Its function is as follows. An essential GTPase that binds both GDP and GTP, with rapid nucleotide exchange. Plays a role in 16S rRNA processing and 30S ribosomal subunit biogenesis and possibly also in cell cycle regulation and energy metabolism. This is GTPase Era from Treponema denticola (strain ATCC 35405 / DSM 14222 / CIP 103919 / JCM 8153 / KCTC 15104).